The primary structure comprises 312 residues: MASTDPGTGTPLDESVPGIKRAMRQSTKNTPRAGRNLPAAIAVGLSIGGVLVATLVFAPRIWVVLCAGAIFVASHEVVRRLREAGYVIPAIPLLIGGQFTVWLTWPYRTVGALAGFGATVVVCMIWRLVMHDNSKQHESREALAGPPVSNYLRDASATVFLAAWVPLFASFAALLVYPKDGAGRVFCLMIAVVASDVGGYTVGVLFGKHPLVPRISPNKSWEGFAGSLVCGTTATILTATFLAGKTPWVGALLSFVLVLTCTLGDLVESQVKRDLGIKDMGRLLPGHGGLMDRLDGVLPSAVVAWTMLTLLP.

The disordered stretch occupies residues 1-31; that stretch reads MASTDPGTGTPLDESVPGIKRAMRQSTKNTP. A run of 8 helical transmembrane segments spans residues 37–57, 58–78, 85–105, 110–130, 157–177, 186–206, 223–243, and 247–267; these read LPAAIAVGLSIGGVLVATLVF, APRIWVVLCAGAIFVASHEVV, GYVIPAIPLLIGGQFTVWLTW, VGALAGFGATVVVCMIWRLVM, ATVFLAAWVPLFASFAALLVY, FCLMIAVVASDVGGYTVGVLF, GFAGSLVCGTTATILTATFLA, and PWVGALLSFVLVLTCTLGDLV.

It belongs to the CDS family.

Its subcellular location is the cell membrane. It catalyses the reaction a 1,2-diacyl-sn-glycero-3-phosphate + CTP + H(+) = a CDP-1,2-diacyl-sn-glycerol + diphosphate. The protein operates within phospholipid metabolism; CDP-diacylglycerol biosynthesis; CDP-diacylglycerol from sn-glycerol 3-phosphate: step 3/3. This chain is Phosphatidate cytidylyltransferase (cdsA), found in Mycobacterium leprae (strain TN).